Consider the following 1456-residue polypeptide: Macrophage mannose receptor 1 (1456 aa).

The signal sequence occupies residues 1-19 (MRLLLLLAFISVIPVSVQL). The Extracellular segment spans residues 20–1388 (LDARQFLIYN…DPQPKGSSKA (1369 aa)). The 121-residue stretch at 22–142 (ARQFLIYNED…SGLWSRWKVY (121 aa)) folds into the Ricin B-type lectin domain. 7 cysteine pairs are disulfide-bonded: Cys-35–Cys-49, Cys-74–Cys-91, Cys-102–Cys-149, Cys-168–Cys-194, Cys-182–Cys-209, Cys-247–Cys-340, and Cys-316–Cys-332. N-linked (GlcNAc...) asparagine glycosylation is present at Asn-104. The region spanning 163 to 211 (ANGAVCAFPFKFENKWYADCTSAGRSDGWLWCGTTTDYDKDKLFGFCPL) is the Fibronectin type-II domain. The 117-residue stretch at 225–341 (LTGILYQINS…CVQKLGYICK (117 aa)) folds into the C-type lectin 1 domain. Residue Asn-344 is glycosylated (N-linked (GlcNAc...) asparagine). 4 consecutive C-type lectin domains span residues 369–487 (YAGH…YICK), 511–626 (HGFY…FVCK), 655–778 (KTSM…WICQ), and 807–923 (YKDY…FICQ). Cystine bridges form between Cys-391–Cys-486 and Cys-463–Cys-478. N-linked (GlcNAc...) asparagine glycosylation is present at Asn-529. 6 disulfide bridges follow: Cys-532/Cys-625, Cys-600/Cys-617, Cys-680/Cys-777, Cys-753/Cys-769, Cys-828/Cys-922, and Cys-899/Cys-914. Residues Asn-926 and Asn-930 are each glycosylated (N-linked (GlcNAc...) asparagine). 3 consecutive C-type lectin domains span residues 951–1079 (YKNK…YICQ), 1101–1212 (YGKS…FLCK), and 1240–1355 (FYGH…FICK). Cystine bridges form between Cys-976–Cys-1078, Cys-1051–Cys-1070, Cys-1122–Cys-1211, Cys-1189–Cys-1203, Cys-1262–Cys-1354, and Cys-1331–Cys-1346. An N-linked (GlcNAc...) asparagine glycan is attached at Asn-1159. Asn-1204 carries an N-linked (GlcNAc...) asparagine glycan. A helical membrane pass occupies residues 1389–1409 (AGVVTVVLLIVIGAGVAAYFF). Over 1410 to 1456 (YKKRHALHIPQEATFENTLYFNSNLSPGTSDTKDLMGNIEQNEHAII) the chain is Cytoplasmic.

Detected in macrophages.

The protein localises to the endosome membrane. It is found in the cell membrane. Mediates the endocytosis of glycoproteins by macrophages. Binds both sulfated and non-sulfated polysaccharide chains. Acts as phagocytic receptor for bacteria, fungi and other pathogens. In Mus musculus (Mouse), this protein is Macrophage mannose receptor 1 (Mrc1).